A 471-amino-acid polypeptide reads, in one-letter code: Alpha-galactosidase (471 aa).

The N-terminal stretch at 1-18 (MSYIYLFITAAAVTGALG) is a signal peptide. Cys42 and Cys74 are joined by a disulfide. Asp72 and Asp73 together coordinate substrate. A glycan (N-linked (GlcNAc...) asparagine) is linked at Asn82. A disulfide bridge connects residues Cys121 and Cys151. A substrate-binding site is contributed by Lys147. The active-site Nucleophile is Asp149. A glycan (N-linked (GlcNAc...) asparagine) is linked at Asn175. Position 205 (Arg205) interacts with substrate. The Proton donor role is filled by Asp209. 2 cysteine pairs are disulfide-bonded: Cys221-Cys237 and Cys223-Cys230. Residue Gln251 coordinates substrate. Residues Asn270, Asn361, Asn370, Asn417, Asn422, Asn435, and Asn454 are each glycosylated (N-linked (GlcNAc...) asparagine).

The protein belongs to the glycosyl hydrolase 27 family. In terms of assembly, homotetramer.

It localises to the secreted. It catalyses the reaction Hydrolysis of terminal, non-reducing alpha-D-galactose residues in alpha-D-galactosides, including galactose oligosaccharides, galactomannans and galactolipids.. This Saccharomyces mikatae (Yeast) protein is Alpha-galactosidase (MEL).